The following is a 315-amino-acid chain: Protein OPG185 (315 aa).

Residues 1 to 16 form the signal peptide; that stretch reads MTRLPILLLLISLVYA. The 105-residue stretch at 17 to 121 folds into the Ig-like V-type domain; that stretch reads TPFPQTSKKI…NDTDKVDYEE (105 aa). Over 17–279 the chain is Virion surface; that stretch reads TPFPQTSKKI…SNYKTKDFVE (263 aa). The cysteines at positions 34 and 103 are disulfide-linked. N-linked (GlcNAc...) asparagine; by host glycosylation is found at Asn-37, Asn-69, Asn-112, and Asn-161. The segment covering 193–202 has biased composition (polar residues); that stretch reads NTVSASSGES. The interval 193-213 is disordered; the sequence is NTVSASSGESTTDETPEPITD. N-linked (GlcNAc...) asparagine; by host glycosylation occurs at Asn-254. Residues 280 to 303 form a helical membrane-spanning segment; it reads IFGITALIILSAVAIFCITYYIYN. Topologically, residues 304-315 are intravirion; the sequence is KRSRKYKTENKV.

The protein belongs to the orthopoxvirus OPG185 family. Heterodimerizes with OPG040. The heterodimer OPG185-OPG040 interacts with components of the entry fusion complex OPG143 and OPG094. Heterodimer with C3/VPC protein; disulfide-linked. Glycosylated; contains phosphate and sulfate-substituted glycans. O-glycosylation is required for hemagglutination and hemadsorption activities of infected cell membranes.

It is found in the virion membrane. The protein localises to the host membrane. Functionally, prevents cell to cell fusion by interacting with and directing the viral OPG040 protein on the host plasma membrane. The OPG185-OPG040 complex associates with components of the entry fusion complex (EFC) presumably to avoid superinfection and syncytium formation. Via its interaction with C3/VCP protein, protects the infected cell and probably also the extracellular enveloped virus from complement attack. The protein is Protein OPG185 (OPG185) of Homo sapiens (Human).